Reading from the N-terminus, the 383-residue chain is Homoserine O-acetyltransferase (383 aa).

Residues 52 to 362 (NAILVCHALT…PWGHDAFLLD (311 aa)) form the AB hydrolase-1 domain. Residue S158 is the Nucleophile of the active site. R227 provides a ligand contact to substrate. Residues D323 and H356 contribute to the active site. Position 357 (D357) interacts with substrate.

The protein belongs to the AB hydrolase superfamily. MetX family. In terms of assembly, homodimer.

The protein localises to the cytoplasm. The enzyme catalyses L-homoserine + acetyl-CoA = O-acetyl-L-homoserine + CoA. The protein operates within amino-acid biosynthesis; L-methionine biosynthesis via de novo pathway; O-acetyl-L-homoserine from L-homoserine: step 1/1. Its function is as follows. Transfers an acetyl group from acetyl-CoA to L-homoserine, forming acetyl-L-homoserine. The protein is Homoserine O-acetyltransferase of Symbiobacterium thermophilum (strain DSM 24528 / JCM 14929 / IAM 14863 / T).